Reading from the N-terminus, the 447-residue chain is Cysteine--tRNA ligase (447 aa).

Cysteine 28 serves as a coordination point for Zn(2+). Residues 30-40 (PTVYNYIHVGN) carry the 'HIGH' region motif. Zn(2+) is bound by residues cysteine 211, histidine 236, and glutamate 240. The short motif at 268–272 (KMSKS) is the 'KMSKS' region element. Residue lysine 271 participates in ATP binding.

Belongs to the class-I aminoacyl-tRNA synthetase family. In terms of assembly, monomer. Zn(2+) serves as cofactor.

It localises to the cytoplasm. It catalyses the reaction tRNA(Cys) + L-cysteine + ATP = L-cysteinyl-tRNA(Cys) + AMP + diphosphate. This is Cysteine--tRNA ligase from Streptococcus pneumoniae serotype 4 (strain ATCC BAA-334 / TIGR4).